A 226-amino-acid polypeptide reads, in one-letter code: Ribonuclease 3 (226 aa).

Residues 6–128 (FNKLQKKMGY…IIGGIFLDSN (123 aa)) form the RNase III domain. E41 contributes to the Mg(2+) binding site. The active site involves D45. 2 residues coordinate Mg(2+): N114 and E117. Residue E117 is part of the active site. The 71-residue stretch at 155–225 (DPKTRLQEYL…AKQALLLFNI (71 aa)) folds into the DRBM domain.

The protein belongs to the ribonuclease III family. Homodimer. Requires Mg(2+) as cofactor.

It localises to the cytoplasm. The catalysed reaction is Endonucleolytic cleavage to 5'-phosphomonoester.. Digests double-stranded RNA. Involved in the processing of primary rRNA transcript to yield the immediate precursors to the large and small rRNAs (23S and 16S). Processes some mRNAs, and tRNAs when they are encoded in the rRNA operon. Processes pre-crRNA and tracrRNA of type II CRISPR loci if present in the organism. This Wigglesworthia glossinidia brevipalpis protein is Ribonuclease 3.